The sequence spans 249 residues: Aspartate/glutamate leucyltransferase (249 aa).

It belongs to the R-transferase family. Bpt subfamily.

The protein localises to the cytoplasm. It catalyses the reaction N-terminal L-glutamyl-[protein] + L-leucyl-tRNA(Leu) = N-terminal L-leucyl-L-glutamyl-[protein] + tRNA(Leu) + H(+). The enzyme catalyses N-terminal L-aspartyl-[protein] + L-leucyl-tRNA(Leu) = N-terminal L-leucyl-L-aspartyl-[protein] + tRNA(Leu) + H(+). Functionally, functions in the N-end rule pathway of protein degradation where it conjugates Leu from its aminoacyl-tRNA to the N-termini of proteins containing an N-terminal aspartate or glutamate. In Brucella suis (strain ATCC 23445 / NCTC 10510), this protein is Aspartate/glutamate leucyltransferase.